We begin with the raw amino-acid sequence, 468 residues long: Glutamine synthetase (468 aa).

A GS beta-grasp domain is found at 11 to 96; it reads HDVKWIDLRF…LVCDIIEPST (86 aa). One can recognise a GS catalytic domain in the interval 104-468; sequence PRAIAHRAEE…PLEYELYYSC (365 aa). Positions 129 and 131 each coordinate Mg(2+). Glu-207 lines the ATP pocket. The Mg(2+) site is built by Glu-212 and Glu-220. Residues 264–265 and Gly-265 contribute to the L-glutamate site; that span reads NG. His-269 provides a ligand contact to Mg(2+). ATP-binding positions include 271–273 and Ser-273; that span reads HMS. The L-glutamate site is built by Arg-321, Glu-327, and Arg-339. Positions 339, 344, and 352 each coordinate ATP. A Mg(2+)-binding site is contributed by Glu-357. Arg-359 contacts L-glutamate. Tyr-397 carries the post-translational modification O-AMP-tyrosine.

The protein belongs to the glutamine synthetase family. Oligomer of 12 subunits arranged in the form of two hexagons. The cofactor is Mg(2+). Mn(2+) is required as a cofactor.

It catalyses the reaction L-glutamate + NH4(+) + ATP = L-glutamine + ADP + phosphate + H(+). Its activity is regulated as follows. When cellular nitrogen levels are high, the C-terminal adenylyl transferase (AT) of GlnE inhibits GlnA by covalent transfer of an adenylyl group from ATP to Tyr-397. Conversely, when nitrogen levels are low, the N-terminal adenylyl removase (AR) of GlnE activates GlnA by removing the adenylyl group by phosphorolysis. The fully adenylated enzyme complex is inactive. Catalyzes the formation of glutamine from glutamate and ammonia. In vitro, can also use hydroxylamine, methylamine and ethylamine, with 32%, 7% and 1% activity compared to ammonia, respectively. The chain is Glutamine synthetase from Pseudomonas taetrolens.